Consider the following 968-residue polypeptide: Isoleucine--tRNA ligase (968 aa).

The 'HIGH' region signature appears at 68–78; the sequence is PYANGALHMGH. Residue Glu582 participates in L-isoleucyl-5'-AMP binding. Positions 623-627 match the 'KMSKS' region motif; the sequence is KMSKS. Residue Lys626 participates in ATP binding. Zn(2+) is bound by residues Cys936, Cys939, Cys956, and Cys959.

It belongs to the class-I aminoacyl-tRNA synthetase family. IleS type 1 subfamily. Monomer. Requires Zn(2+) as cofactor.

It localises to the cytoplasm. The catalysed reaction is tRNA(Ile) + L-isoleucine + ATP = L-isoleucyl-tRNA(Ile) + AMP + diphosphate. Catalyzes the attachment of isoleucine to tRNA(Ile). As IleRS can inadvertently accommodate and process structurally similar amino acids such as valine, to avoid such errors it has two additional distinct tRNA(Ile)-dependent editing activities. One activity is designated as 'pretransfer' editing and involves the hydrolysis of activated Val-AMP. The other activity is designated 'posttransfer' editing and involves deacylation of mischarged Val-tRNA(Ile). The sequence is that of Isoleucine--tRNA ligase from Prochlorococcus marinus (strain MIT 9312).